We begin with the raw amino-acid sequence, 782 residues long: Spastin (782 aa).

A disordered region spans residues 1–103; it reads MVRTKNQSSS…GNAPRGGNSS (103 aa). At 1–115 the chain is on the cytoplasmic side; it reads MVRTKNQSSS…KQNLYVVSFP (115 aa). Positions 1 to 212 are required for localization to punctate cytoplasmic foci; it reads MVRTKNQSSS…RAIQPLEMAG (212 aa). Residues 8–19 show a composition bias toward low complexity; it reads SSSSSASSSTKS. Positions 25–34 are enriched in polar residues; the sequence is GGTTNRSRSC. 2 stretches are compositionally biased toward low complexity: residues 44–75 and 84–93; these read SKSSSKPTSNNRQRTTTNNNTTAITTTPGSSP and TTDADLTPTS. Positions 116-136 form an intramembrane region, helical; the sequence is IIFLFNVLRSLIYQLFCIFRY. The Cytoplasmic segment spans residues 137–782; the sequence is LYGASTKVIY…WSQDYGDITI (646 aa). The interval 210–782 is sufficient for interaction with microtubules and microtubule severing; sequence MAGNRAGGNY…WSQDYGDITI (573 aa). One can recognise an MIT domain in the interval 235–310; that stretch reads HRRAFEYISK…SMARDRLHFL (76 aa). The interval 325-479 is disordered; the sequence is KEQQQKKKSP…GSGSGASTPM (155 aa). Residues 334–343 are compositionally biased toward low complexity; the sequence is PQQQPQQQQQ. Composition is skewed to polar residues over residues 408–426 and 447–463; these read NKSQTLPRNLGSKTSSTSV and QFSSGRNTPPQRSRTPI. The interval 465–479 is required for interaction with microtubules; the sequence is NNAAGGSGSGASTPM. Position 547-554 (547-554) interacts with ATP; that stretch reads GPPGNGKT.

Belongs to the AAA ATPase family. Spastin subfamily. In terms of assembly, homohexamer. The homohexamer is stabilized by ATP-binding. The homohexamer may adopt a ring conformation through which microtubules pass prior to being severed. Interacts with microtubules. Interacts with atl; may be involved in microtubule dynamics.

The protein resides in the membrane. The protein localises to the cytoplasm. Its subcellular location is the cytoskeleton. It localises to the microtubule organizing center. It is found in the centrosome. The protein resides in the chromosome. The protein localises to the lipid droplet. The enzyme catalyses n ATP + n H2O + a microtubule = n ADP + n phosphate + (n+1) alpha/beta tubulin heterodimers.. In terms of biological role, ATP-dependent microtubule severing protein. Stimulates microtubule minus-end depolymerization and poleward microtubule flux in the mitotic spindle. Regulates microtubule stability in the neuromuscular junction synapse. Involved in lipid metabolism by regulating the size and distribution of lipid droplets. Involved in axon regeneration by regulating microtubule severing. This is Spastin from Drosophila grimshawi (Hawaiian fruit fly).